We begin with the raw amino-acid sequence, 490 residues long: Aspartyl/glutamyl-tRNA(Asn/Gln) amidotransferase subunit B (490 aa).

The protein belongs to the GatB/GatE family. GatB subfamily. Heterotrimer of A, B and C subunits.

It catalyses the reaction L-glutamyl-tRNA(Gln) + L-glutamine + ATP + H2O = L-glutaminyl-tRNA(Gln) + L-glutamate + ADP + phosphate + H(+). The enzyme catalyses L-aspartyl-tRNA(Asn) + L-glutamine + ATP + H2O = L-asparaginyl-tRNA(Asn) + L-glutamate + ADP + phosphate + 2 H(+). Allows the formation of correctly charged Asn-tRNA(Asn) or Gln-tRNA(Gln) through the transamidation of misacylated Asp-tRNA(Asn) or Glu-tRNA(Gln) in organisms which lack either or both of asparaginyl-tRNA or glutaminyl-tRNA synthetases. The reaction takes place in the presence of glutamine and ATP through an activated phospho-Asp-tRNA(Asn) or phospho-Glu-tRNA(Gln). The polypeptide is Aspartyl/glutamyl-tRNA(Asn/Gln) amidotransferase subunit B (Methylorubrum extorquens (strain PA1) (Methylobacterium extorquens)).